Here is a 287-residue protein sequence, read N- to C-terminus: ATP synthase gamma chain (287 aa).

This sequence belongs to the ATPase gamma chain family. In terms of assembly, F-type ATPases have 2 components, CF(1) - the catalytic core - and CF(0) - the membrane proton channel. CF(1) has five subunits: alpha(3), beta(3), gamma(1), delta(1), epsilon(1). CF(0) has three main subunits: a, b and c.

It is found in the cell inner membrane. Produces ATP from ADP in the presence of a proton gradient across the membrane. The gamma chain is believed to be important in regulating ATPase activity and the flow of protons through the CF(0) complex. This Yersinia pestis protein is ATP synthase gamma chain.